A 397-amino-acid chain; its full sequence is Phosphoglycerate kinase (397 aa).

Substrate is bound by residues 25–27, arginine 41, 64–67, arginine 118, and arginine 151; these read DLN and HLGR. ATP contacts are provided by residues lysine 202, glutamate 324, and 350–353; that span reads GGDT.

Belongs to the phosphoglycerate kinase family. In terms of assembly, monomer.

It localises to the cytoplasm. The catalysed reaction is (2R)-3-phosphoglycerate + ATP = (2R)-3-phospho-glyceroyl phosphate + ADP. It functions in the pathway carbohydrate degradation; glycolysis; pyruvate from D-glyceraldehyde 3-phosphate: step 2/5. The chain is Phosphoglycerate kinase from Acidovorax ebreus (strain TPSY) (Diaphorobacter sp. (strain TPSY)).